The following is a 479-amino-acid chain: MAAGVAARTLRGLAVAGGGETSDSEDDGWEIGYLDRAAQKLKGPLPTEEKNETFKKALTTGDILLVKELLNSGISVDSSFRYGWTPLMYAASVSNVELVRVLLDRGANASFDKDKQTILITACSARGSEEQILKCVELLLSRNADPNVPCRRLMTPIMYAARDGHTQVVALLVAHGAEVNTQDENGYTALTWAARQGHKNVVLKLLELGANKMLQTKDGKTPSEIAKRNKHVEIFSFLSLTLNPLEGKLQQLTKEETICKLLTTDSDKEKDNIFSSYTALGDLEIFLHGLGLEHMTDLLKERDITLRHLLTMKKDEFTKNGITSRDQQKILDALKELQVDEIKFGELPEVTKLEISGDEFLNFLLKLNKQCRHLITAVQNIITELPVNSHKIVLEWASPRNFTSVCEELISNVEDLNEEVCKLKDLIQKLQNERENDPTHIPLIEEVSTWNSGILKRTALAVCGFGFLLFICKLTFQRK.

Phosphoserine occurs at positions 22 and 24. ANK repeat units lie at residues Glu-49–Ser-78, Tyr-82–Phe-111, Asp-114–Val-148, Arg-152–Thr-181, Asn-185–Leu-214, and Asp-218–Gly-247. An SAM domain is found at Ser-276–Gln-338.

As to quaternary structure, interacts with DDX4, PIWIL1, RANBP9 and TDRD1.

It localises to the cytoplasm. In terms of biological role, plays a central role during spermatogenesis by repressing transposable elements and preventing their mobilization, which is essential for the germline integrity. Acts via the piRNA metabolic process, which mediates the repression of transposable elements during meiosis by forming complexes composed of piRNAs and Piwi proteins and governs the methylation and subsequent repression of transposons. Its association with pi-bodies suggests a participation in the primary piRNAs metabolic process. Required prior to the pachytene stage to facilitate the production of multiple types of piRNAs, including those associated with repeats involved in the regulation of retrotransposons. May act by mediating protein-protein interactions during germ cell maturation. In Rhinolophus ferrumequinum (Greater horseshoe bat), this protein is Ankyrin repeat, SAM and basic leucine zipper domain-containing protein 1 (ASZ1).